Reading from the N-terminus, the 660-residue chain is Rhamnogalacturonate lyase B (660 aa).

An N-terminal signal peptide occupies residues 1 to 18 (MRLGVCFSLAAAASVARA). N-linked (GlcNAc...) asparagine glycans are attached at residues N25, N109, N142, and N284. A disordered region spans residues 446 to 466 (RLGTPDKSSGEFRHGAARDPT). Residues 453 to 466 (SSGEFRHGAARDPT) are compositionally biased toward basic and acidic residues. Residues N524, N566, and N635 are each glycosylated (N-linked (GlcNAc...) asparagine).

It belongs to the polysaccharide lyase 4 family.

The protein localises to the secreted. It catalyses the reaction Endotype eliminative cleavage of L-alpha-rhamnopyranosyl-(1-&gt;4)-alpha-D-galactopyranosyluronic acid bonds of rhamnogalacturonan I domains in ramified hairy regions of pectin leaving L-rhamnopyranose at the reducing end and 4-deoxy-4,5-unsaturated D-galactopyranosyluronic acid at the non-reducing end.. Functionally, pectinolytic enzymes consist of four classes of enzymes: pectin lyase, polygalacturonase, pectin methylesterase and rhamnogalacturonase. Degrades the rhamnogalacturonan I (RG-I) backbone of pectin. Active against linseed rhamnogalacturonan. This Emericella nidulans (strain FGSC A4 / ATCC 38163 / CBS 112.46 / NRRL 194 / M139) (Aspergillus nidulans) protein is Rhamnogalacturonate lyase B (rglB).